Reading from the N-terminus, the 306-residue chain is Uracil-DNA glycosylase (306 aa).

An interaction with FAM72A region spans residues 1–25 (MIGQKTLYSFFSPTPTGKRTTRSPE). The segment at 11–31 (FSPTPTGKRTTRSPEPVPGSG) is disordered. Residue Ser12 is modified to Phosphoserine. Residues 17–19 (GKR) carry the Important for nuclear sorting motif. 3 positions are modified to phosphoserine: Ser23, Ser43, and Ser57. The interaction with RPA2 stretch occupies residues 66–81 (RIQRNKAAALLRLAAR). Gln146 is a binding site for uracil. Asp147 acts as the Proton acceptor in catalysis. His150 serves as a coordination point for dsDNA. Residue Phe160 coordinates uracil. Ser171 serves as a coordination point for dsDNA. Residue Asn206 participates in uracil binding. 4 residues coordinate dsDNA: Ser249, His270, Ser272, and Arg278. Position 270 (His270) interacts with uracil. The residue at position 288 (Lys288) is an N6-acetyllysine.

This sequence belongs to the uracil-DNA glycosylase (UDG) superfamily. UNG family. As to quaternary structure, interacts with RPA2 subunit of the RPA trimer; this interaction mediates UNG2 recruitment to RPA-coated single-stranded DNA at stalled replication forks. Interacts with PCNA; this interaction mediates UNG2 recruitment to S-phase replication foci. Interacts (via N-terminus) with FAM72A. In terms of processing, processed by cleavage of a transit peptide.

Its subcellular location is the mitochondrion. The protein resides in the nucleus. The catalysed reaction is Hydrolyzes single-stranded DNA or mismatched double-stranded DNA and polynucleotides, releasing free uracil.. It catalyses the reaction a 2'-deoxyuridine in single-stranded DNA + H2O = a 2'-deoxyribose 5'-monophosphate in single-stranded DNA + uracil. The enzyme catalyses a 2'-deoxyuridine in double-stranded DNA + H2O = a 2'-deoxyribose 5'-monophosphate in double-stranded DNA + uracil. Its function is as follows. Uracil-DNA glycosylase that hydrolyzes the N-glycosidic bond between uracil and deoxyribose in single- and double-stranded DNA (ssDNA and dsDNA) to release a free uracil residue and form an abasic (apurinic/apyrimidinic; AP) site. Excises uracil residues arising as a result of misincorporation of dUMP residues by DNA polymerase during replication or due to spontaneous or enzymatic deamination of cytosine. Mediates error-free base excision repair (BER) of uracil at replication forks. According to the model, it is recruited by PCNA to S-phase replication forks to remove misincorporated uracil at U:A base mispairs in nascent DNA strands. Via trimeric RPA it is recruited to ssDNA stretches ahead of the polymerase to allow detection and excision of deaminated cytosines prior to replication. The resultant AP sites temporarily stall replication, allowing time to repair the lesion. Mediates mutagenic uracil processing involved in antibody affinity maturation. Processes AICDA-induced U:G base mispairs at variable Ig regions leading to the generation of transversion mutations. Additionally, it operates at switch sites of Ig constant regions where it mediates Ig isotype class switch recombination. Excises AICDA-induced uracil residues forming AP sites that are subsequently nicked by APEX1 endonuclease. The accumulation of staggered nicks in opposite strands results in double strand DNA breaks that are finally resolved via non-homologous end joining repair pathway. In Mus musculus (Mouse), this protein is Uracil-DNA glycosylase (Ung).